The sequence spans 377 residues: Probable G-protein coupled receptor F27E5.8 (377 aa).

Over 1 to 34 the chain is Extracellular; it reads MSEQDSSSPKYMRFLLGNFTSAEMVTDGNFLIYC. N18 is a glycosylation site (N-linked (GlcNAc...) asparagine). Residues 35–55 form a helical membrane-spanning segment; the sequence is IEMGLLVIGVLENIFMIGAVF. At 56 to 71 the chain is on the cytoplasmic side; that stretch reads STSCLHLNLRILICNC. The helical transmembrane segment at 72-92 threads the bilayer; that stretch reads CLGFILMAVGRAMIAVPLCIA. The Extracellular segment spans residues 93–105; sequence HLRDVDISSHAWC. The helical transmembrane segment at 106-126 threads the bilayer; sequence FIANAVHHSSADSVCLSFVFI. Over 127–144 the chain is Cytoplasmic; sequence MLERTAGTIWSKDYEKTK. Residues 145–165 traverse the membrane as a helical segment; the sequence is IHIFPCIFAFLQWFIPMFMIL. Topologically, residues 166-195 are extracellular; the sequence is GNFLDRANRMEHFLLYPHLPCQIEYLTPTM. Residues 196-216 form a helical membrane-spanning segment; that stretch reads FMITIFIIVIGFIASVGGITI. The Cytoplasmic portion of the chain corresponds to 217-251; the sequence is VYNKNIKKYNTRDIWFNTVNLSERYQITENIRSTH. The chain crosses the membrane as a helical span at residues 252–272; sequence LLFPLLALMLIFSTLSVSVLI. Topologically, residues 273 to 303 are extracellular; it reads YGGYWVSVMTKEPARFEEVVKWFGRGGEAAQ. The chain crosses the membrane as a helical span at residues 304 to 324; sequence LFDIITAIYTISFPICAFICH. Topologically, residues 325-377 are cytoplasmic; sequence PNLFRFLRKFIGWNSYAVRPSNLNEIGGFEMSTAPIRTQTEFHFQELSRQWNT.

It belongs to the G-protein coupled receptor 1 family.

It localises to the cell membrane. This is Probable G-protein coupled receptor F27E5.8 from Caenorhabditis elegans.